The chain runs to 104 residues: Cytochrome c oxidase assembly factor 6 (104 aa).

Positions 1-22 (MGLFSFDGGKKESQPPNTRSQR) are disordered. Residues 22–76 (RKLCWESRDAFFQCLDKADILDAMDPKNSKSIKSHCKVENEKFEENCAHSWIKYF) enclose the CHCH domain. A Cx9C motif motif is present at residues 25-35 (CWESRDAFFQC). 2 disulfides stabilise this stretch: cysteine 25-cysteine 68 and cysteine 35-cysteine 57. A Cx10C motif motif is present at residues 57-68 (CKVENEKFEENC).

Belongs to the cytochrome c oxidase subunit 6B family. As to quaternary structure, interacts with COX2.

It localises to the cytoplasm. It is found in the nucleus. Its subcellular location is the mitochondrion intermembrane space. In terms of biological role, involved in the maturation of the mitochondrial respiratory chain complex IV subunit MT-CO2/COX2. Thereby, may regulate early steps of complex IV assembly. Mitochondrial respiratory chain complex IV or cytochrome c oxidase is the component of the respiratory chain that catalyzes the transfer of electrons from intermembrane space cytochrome c to molecular oxygen in the matrix and as a consequence contributes to the proton gradient involved in mitochondrial ATP synthesis. May also be required for efficient formation of respiratory supercomplexes comprised of complexes III and IV. The protein is Cytochrome c oxidase assembly factor 6 of Saccharomyces cerevisiae (strain ATCC 204508 / S288c) (Baker's yeast).